The sequence spans 141 residues: Hemoglobin subunit alpha-2 (141 aa).

One can recognise a Globin domain in the interval 1–141 (VLTEDDKNHV…VCKDLVSKYR (141 aa)). His58 contacts O2. Position 87 (His87) interacts with heme b.

The protein belongs to the globin family. As to quaternary structure, the major hemoglobin component (HbIII) is a heterotetramer of two alpha-2 chains and two beta-1 chains. In terms of tissue distribution, red blood cells.

Its function is as follows. Involved in oxygen transport from the lung to the various peripheral tissues. The chain is Hemoglobin subunit alpha-2 from Varanus albigularis (White-throated monitor).